We begin with the raw amino-acid sequence, 611 residues long: Guanylate-binding protein 6 (611 aa).

The GTPase domain (Globular) stretch occupies residues 1–308 (MTQPQMAPIC…NAINSGAVPC (308 aa)). The 243-residue stretch at 33–275 (SQPVVVVAIV…FVSYIFTYAK (243 aa)) folds into the GB1/RHD3-type G domain. GTP is bound by residues 43–50 (GLYRTGKS), 65–67 (LGS), and 95–99 (DTEGL).

It belongs to the TRAFAC class dynamin-like GTPase superfamily. GB1/RHD3 GTPase family. GB1 subfamily.

Its subcellular location is the cytoplasmic vesicle. It catalyses the reaction GTP + H2O = GDP + phosphate + H(+). In terms of biological role, interferon (IFN)-inducible GTPase that plays important roles in innate immunity against a diverse range of bacterial, viral and protozoan pathogens, such as bacterial pathogens Listeria monocytogenes and Mycobacterium bovis BCG as well as the protozoan pathogen Toxoplasma gondii. Confers protection to several pathogens, including the bacterial pathogens Listeria monocytogenes and Mycobacterium bovis BCG as well as the protozoan pathogen Toxoplasma gondii. The polypeptide is Guanylate-binding protein 6 (Gbp6) (Mus musculus (Mouse)).